A 109-amino-acid chain; its full sequence is Large ribosomal subunit protein uL24 (109 aa).

Belongs to the universal ribosomal protein uL24 family. Part of the 50S ribosomal subunit.

Functionally, one of two assembly initiator proteins, it binds directly to the 5'-end of the 23S rRNA, where it nucleates assembly of the 50S subunit. Its function is as follows. One of the proteins that surrounds the polypeptide exit tunnel on the outside of the subunit. The sequence is that of Large ribosomal subunit protein uL24 from Desulforapulum autotrophicum (strain ATCC 43914 / DSM 3382 / VKM B-1955 / HRM2) (Desulfobacterium autotrophicum).